A 732-amino-acid polypeptide reads, in one-letter code: Translation initiation factor eIF2B subunit epsilon (732 aa).

Positions 559–726 (GEEEEDFGVE…QEADEEDSDE (168 aa)) constitute a W2 domain.

It belongs to the eIF-2B gamma/epsilon subunits family. In terms of assembly, component of the translation initiation factor 2B (eIF2B) complex which is a heterodecamer of two sets of five different subunits: alpha, beta, gamma, delta and epsilon. Subunits alpha, beta and delta comprise a regulatory subcomplex and subunits epsilon and gamma comprise a catalytic subcomplex. Within the complex, the hexameric regulatory complex resides at the center, with the two heterodimeric catalytic subcomplexes bound on opposite sides.

It localises to the cytoplasm. Its subcellular location is the cytosol. In terms of biological role, acts as a component of the translation initiation factor 2B (eIF2B) complex, which catalyzes the exchange of GDP for GTP on the eukaryotic initiation factor 2 (eIF2) complex gamma subunit. Its guanine nucleotide exchange factor activity is repressed when bound to eIF2 complex phosphorylated on the alpha subunit, thereby limiting the amount of methionyl-initiator methionine tRNA available to the ribosome and consequently global translation is repressed. This Candida albicans (strain SC5314 / ATCC MYA-2876) (Yeast) protein is Translation initiation factor eIF2B subunit epsilon (GCD6).